We begin with the raw amino-acid sequence, 290 residues long: tRNA pseudouridine synthase A (290 aa).

The active-site Nucleophile is aspartate 56. Tyrosine 109 is a binding site for substrate.

This sequence belongs to the tRNA pseudouridine synthase TruA family.

It carries out the reaction uridine(38/39/40) in tRNA = pseudouridine(38/39/40) in tRNA. In terms of biological role, formation of pseudouridine at positions 38, 39 and 40 in the anticodon stem and loop of transfer RNAs. In Methanobrevibacter smithii (strain ATCC 35061 / DSM 861 / OCM 144 / PS), this protein is tRNA pseudouridine synthase A.